A 597-amino-acid chain; its full sequence is Integrator complex subunit 11 (597 aa).

Zn(2+) is bound by residues histidine 68, histidine 70, aspartate 72, histidine 73, histidine 157, and aspartate 178. An HXHXDH motif motif is present at residues 68–73 (HFHLDH). Residue glutamate 203 is part of the active site. Residue histidine 414 coordinates Zn(2+). Residue lysine 462 participates in 1D-myo-inositol hexakisphosphate binding.

Belongs to the metallo-beta-lactamase superfamily. RNA-metabolizing metallo-beta-lactamase-like family. INTS11 subfamily. Belongs to the multiprotein complex Integrator, at least composed of IntS1, IntS2, IntS3, IntS4, omd/IntS5, IntS6, defl/IntS7, IntS8, IntS9, IntS10, IntS11, IntS12, asun/IntS13, IntS14 and IntS15. The core complex associates with protein phosphatase 2A subunits mts/PP2A and Pp2A-29B, to form the Integrator-PP2A (INTAC) complex. IntS11 is part of the RNA endonuclease subcomplex, composed of IntS4, IntS9, IntS11 and inositol hexakisphosphate (InsP6). Interacts with Brat1; interaction is required for the assembly of the RNA endonuclease subcomplex and inhibits the endonuclease activity of IntS11 before formation of mature integrator complex. The cofactor is Zn(2+). In terms of tissue distribution, expressed in neurons and glia of the larval and adult brain.

It localises to the nucleus. Its subcellular location is the cytoplasm. It is found in the cytosol. The RNA endonuclease activity is inhibited by Brat1 that forms hyrogen bond and hydrophobic interactions with the active site. In terms of biological role, RNA endonuclease component of the integrator complex, a multiprotein complex that terminates RNA polymerase II (Pol II) transcription in the promoter-proximal region of genes. The integrator complex provides a quality checkpoint during transcription elongation by driving premature transcription termination of transcripts that are unfavorably configured for transcriptional elongation: the complex terminates transcription by (1) catalyzing dephosphorylation of the C-terminal domain (CTD) of Pol II subunit Polr2A/Rbp1 and Spt5, and (2) degrading the exiting nascent RNA transcript via endonuclease activity. The integrator complex is also involved in the 3'-end processing of the U7 snRNA, and also the spliceosomal snRNAs U1, U2, U4 and U5. Within the integrator complex, IntS11 constitutes the RNA endonuclease subunit that degrades exiting nascent RNA transcripts. The chain is Integrator complex subunit 11 from Drosophila melanogaster (Fruit fly).